The primary structure comprises 429 residues: Serine hydroxymethyltransferase (429 aa).

Residue 120–122 participates in (6S)-5,6,7,8-tetrahydrofolate binding; that stretch reads GHI. Residue lysine 226 is modified to N6-(pyridoxal phosphate)lysine.

It belongs to the SHMT family. In terms of assembly, homodimer. Requires pyridoxal 5'-phosphate as cofactor.

The protein resides in the cytoplasm. It functions in the pathway amino-acid biosynthesis; glycine biosynthesis; glycine from L-serine: step 1/1. Catalyzes the reversible interconversion of serine and glycine with a modified folate serving as the one-carbon carrier. Also exhibits a pteridine-independent aldolase activity toward beta-hydroxyamino acids, producing glycine and aldehydes, via a retro-aldol mechanism. The protein is Serine hydroxymethyltransferase of Pyrobaculum arsenaticum (strain DSM 13514 / JCM 11321 / PZ6).